The following is a 119-amino-acid chain: NADH-quinone oxidoreductase subunit A (119 aa).

3 helical membrane-spanning segments follow: residues 7 to 27 (FPVL…MFLG), 63 to 83 (LIAI…PWGV), and 88 to 108 (IGWL…VGFV).

It belongs to the complex I subunit 3 family. As to quaternary structure, NDH-1 is composed of 14 different subunits. Subunits NuoA, H, J, K, L, M, N constitute the membrane sector of the complex.

It localises to the cell inner membrane. It carries out the reaction a quinone + NADH + 5 H(+)(in) = a quinol + NAD(+) + 4 H(+)(out). Its function is as follows. NDH-1 shuttles electrons from NADH, via FMN and iron-sulfur (Fe-S) centers, to quinones in the respiratory chain. The immediate electron acceptor for the enzyme in this species is believed to be ubiquinone. Couples the redox reaction to proton translocation (for every two electrons transferred, four hydrogen ions are translocated across the cytoplasmic membrane), and thus conserves the redox energy in a proton gradient. The polypeptide is NADH-quinone oxidoreductase subunit A (Polynucleobacter necessarius subsp. necessarius (strain STIR1)).